The primary structure comprises 410 residues: Alanine racemase (410 aa).

The region spanning 28 to 76 (VDFLHNVANKEEFAGNTSPRTAAYTLVREDASLGSTPKLPLGASYAKNL) is the RPE1 insert domain. Lys83 (proton acceptor; specific for D-alanine) is an active-site residue. Lys83 carries the N6-(pyridoxal phosphate)lysine modification. Arg182 is a substrate binding site. Residue Tyr305 is the Proton acceptor; specific for L-alanine of the active site. Substrate is bound at residue Met353.

This sequence belongs to the alanine racemase family. Pyridoxal 5'-phosphate serves as cofactor.

The enzyme catalyses L-alanine = D-alanine. Its pathway is amino-acid biosynthesis; D-alanine biosynthesis; D-alanine from L-alanine: step 1/1. Its function is as follows. Catalyzes the interconversion of L-alanine and D-alanine. May also act on other amino acids. This is Alanine racemase (alr) from Rickettsia bellii (strain RML369-C).